The chain runs to 177 residues: Putative pre-16S rRNA nuclease (177 aa).

Belongs to the YqgF nuclease family.

It is found in the cytoplasm. Its function is as follows. Could be a nuclease involved in processing of the 5'-end of pre-16S rRNA. In Psychrobacter arcticus (strain DSM 17307 / VKM B-2377 / 273-4), this protein is Putative pre-16S rRNA nuclease.